We begin with the raw amino-acid sequence, 152 residues long: Cornifin-A (152 aa).

The segment at 20–40 is disordered; sequence EVKQPCQPPPQEPCAPKTKEP. A run of 14 repeats spans residues 27–34, 35–42, 43–49, 50–57, 58–65, 66–73, 74–81, 82–89, 90–97, 98–105, 106–113, 114–121, 122–129, and 130–137. The 14 X 8 AA approximate tandem repeats stretch occupies residues 27–137; that stretch reads PPPQEPCAPK…CQPVVPEPCP (111 aa).

This sequence belongs to the cornifin (SPRR) family. In terms of tissue distribution, in squamous epithelia lining the nasal vestibule and in the hard palate.

It is found in the cytoplasm. In terms of biological role, cross-linked envelope protein of keratinocytes. It is a keratinocyte protein that first appears in the cell cytosol, but ultimately becomes cross-linked to membrane proteins by transglutaminase. All that results in the formation of an insoluble envelope beneath the plasma membrane. This is Cornifin-A (Sprr1a) from Rattus norvegicus (Rat).